We begin with the raw amino-acid sequence, 855 residues long: Endochitinase 2 (855 aa).

The N-terminal stretch at 1-22 (MGPTNILAAFIAVSSLFIQSLA) is a signal peptide. Residues 29–340 (SNLAVYWGQG…DIMKEVLLRC (312 aa)) form the GH18 domain. Residue asparagine 90 is glycosylated (N-linked (GlcNAc...) asparagine). The active-site Proton donor is the glutamate 175. Residues 341-672 (DPDPPTSTVT…APSSSTTEDR (332 aa)) are disordered. Over residues 346–400 (TSTVTSTTSASTSTQTSSQSTTMETKTLSASTTPSSPSTVSPSSTMQTTSTGSTS) the composition is skewed to low complexity. A compositionally biased stretch (polar residues) spans 401–456 (IETVTTRSQEPPSTTISTRSASTEPVTTRSQEPPSTTISTRSASTETVTTRSQEPP). Residues 457–483 (STTISTWSASTETSTSSQDSPSTTIST) show a composition bias toward low complexity. Polar residues predominate over residues 484 to 521 (KSAPTGTVTTRSQDLPSTTISTRSPETETETATTKSQG). Positions 522-533 (SPSITLSTRSSS) are enriched in low complexity. Residues 534–555 (AETVSTRSQHSSSTTISTKSAP) are compositionally biased toward polar residues. Low complexity predominate over residues 556–567 (TETGTTSEHSTS). The segment covering 568-641 (MPVSTRSAST…SQTPTTIITG (74 aa)) has biased composition (polar residues). Low complexity-rich tracts occupy residues 642 to 652 (TPSDPVSAPTT) and 659 to 672 (TLTLAPSSSTTEDR). Glycine 826 carries the GPI-anchor amidated glycine lipid modification. The propeptide at 827 to 855 (SAMTVRSMDVVAKALITAGAAVLGLFLGL) is removed in mature form.

It belongs to the glycosyl hydrolase 18 family. Chitinase class III subfamily.

The protein resides in the cell membrane. It carries out the reaction Random endo-hydrolysis of N-acetyl-beta-D-glucosaminide (1-&gt;4)-beta-linkages in chitin and chitodextrins.. In terms of biological role, may be associated with endosporulation. This is Endochitinase 2 (CTS2) from Coccidioides posadasii (strain C735) (Valley fever fungus).